The primary structure comprises 377 residues: Stimulator of interferon genes protein (377 aa).

Topologically, residues 1-21 (MRRAEENNGFGTIPKRRNQHT) are cytoplasmic. A helical membrane pass occupies residues 22 to 42 (PFYASIGMIVVIIVAFTSYHI). Residues 43–57 (TSYGDDRNRAMRQYS) are Extracellular-facing. A helical membrane pass occupies residues 58–80 (FTFSLAYLAFLVGELLRRCCLFA). The Cytoplasmic portion of the chain corresponds to 81-101 (EEYRHIETRYNGSLKKAIQTT). A helical membrane pass occupies residues 102 to 122 (FSFGHNNVLFVASLLFFVVFV). Over 123–154 (ASNDPNGSSSVIQGNSTAEPHTEMRQTSGWQG) the chain is Extracellular. Residues 155-175 (LWGQFIISALLTPLVVHLLGL) traverse the membrane as a helical segment. Residues 176–377 (RELSKVEESQ…LKDSELEIGG (202 aa)) are Cytoplasmic-facing. 2',3'-cGAMP-binding positions include Tyr206, Arg272, 278–279 (RH), and Thr303. Residues Tyr206, Arg272, Arg278, and 300 to 303 (EYAT) each bind 3',3'-c-di-GMP.

It belongs to the TMEM173 family. As to quaternary structure, homodimer.

The protein localises to the endoplasmic reticulum membrane. Sensor of cytosolic DNA from bacteria and viruses that promotes autophagy. Acts by recognizing and binding cyclic GMP-AMP (cGAMP), a messenger produced by CGAS in response to DNA in the cytosol. Following cGAMP-binding, promotes the formation of autophagosomes, leading to target cytosolic DNA for degradation by the lysosome. Exhibits guanine base-specific ligand recognition. Binds 3'-3'linked cGAMP, 2'-3' linked cGAMP and 3'-3' linked c-di-GMP with much greater affinity as compared to 3'-3' linked c-di-AMP. Lacks the C-terminal tail (CTT) found in mammalian orthologs which is essential for interferon signaling. In Nematostella vectensis (Starlet sea anemone), this protein is Stimulator of interferon genes protein.